Here is a 455-residue protein sequence, read N- to C-terminus: Argininosuccinate lyase (455 aa).

Belongs to the lyase 1 family. Argininosuccinate lyase subfamily.

The protein localises to the cytoplasm. The enzyme catalyses 2-(N(omega)-L-arginino)succinate = fumarate + L-arginine. It functions in the pathway amino-acid biosynthesis; L-arginine biosynthesis; L-arginine from L-ornithine and carbamoyl phosphate: step 3/3. The protein is Argininosuccinate lyase of Shewanella sp. (strain MR-7).